The following is a 264-amino-acid chain: Thymidylate synthase (264 aa).

DUMP is bound at residue Arg21. His51 contacts (6R)-5,10-methylene-5,6,7,8-tetrahydrofolate. 126–127 is a dUMP binding site; that stretch reads RR. Cys146 functions as the Nucleophile in the catalytic mechanism. DUMP contacts are provided by residues 166–169, Asn177, and 207–209; these read RSCD and HLY. Asp169 contacts (6R)-5,10-methylene-5,6,7,8-tetrahydrofolate. Residue Ala263 coordinates (6R)-5,10-methylene-5,6,7,8-tetrahydrofolate.

Belongs to the thymidylate synthase family. Bacterial-type ThyA subfamily. As to quaternary structure, homodimer.

It is found in the cytoplasm. It catalyses the reaction dUMP + (6R)-5,10-methylene-5,6,7,8-tetrahydrofolate = 7,8-dihydrofolate + dTMP. Its pathway is pyrimidine metabolism; dTTP biosynthesis. Catalyzes the reductive methylation of 2'-deoxyuridine-5'-monophosphate (dUMP) to 2'-deoxythymidine-5'-monophosphate (dTMP) while utilizing 5,10-methylenetetrahydrofolate (mTHF) as the methyl donor and reductant in the reaction, yielding dihydrofolate (DHF) as a by-product. This enzymatic reaction provides an intracellular de novo source of dTMP, an essential precursor for DNA biosynthesis. The protein is Thymidylate synthase of Photorhabdus laumondii subsp. laumondii (strain DSM 15139 / CIP 105565 / TT01) (Photorhabdus luminescens subsp. laumondii).